Reading from the N-terminus, the 552-residue chain is Hydroxylamine reductase (552 aa).

The [2Fe-2S] cluster site is built by Cys-5, Cys-8, Cys-20, and Cys-27. Positions 251, 275, 319, 407, 435, 460, 494, and 496 each coordinate hybrid [4Fe-2O-2S] cluster. Cys-407 is subject to Cysteine persulfide.

The protein belongs to the HCP family. The cofactor is [2Fe-2S] cluster. Hybrid [4Fe-2O-2S] cluster serves as cofactor.

It is found in the cytoplasm. The catalysed reaction is A + NH4(+) + H2O = hydroxylamine + AH2 + H(+). Its function is as follows. Catalyzes the reduction of hydroxylamine to form NH(3) and H(2)O. In Shigella sonnei (strain Ss046), this protein is Hydroxylamine reductase.